Reading from the N-terminus, the 173-residue chain is MITQQIISSELEVLKKHIDSGDIRIPSLWQGLKPGLIIMGWMIFCPLLMSFLITQKTSETLTAVLAGGWLGLIILFIVARIRMLYFSLPEEFLKTSSVMRVISSKLKVYFIVYMGVIFLWSFLGGGIIYGFGAILVTVIMAFLIQLDIGRYQFVGVIDAINSYVKNKKLSRVK.

It is found in the cell inner membrane. Functionally, involved in surface exclusion. This chain is Protein TraS (traS), found in Escherichia coli (strain K12).